We begin with the raw amino-acid sequence, 132 residues long: Fatty acid-binding protein 12 (132 aa).

A fatty acid contacts are provided by residues Arg107 and 127 to 129; that span reads RTY.

This sequence belongs to the calycin superfamily. Fatty-acid binding protein (FABP) family. In terms of tissue distribution, highly expressed in adult retina and testis with lower levels in cerebral cortex, kidney and epididymis. In the retina, strongly expressed in the ganglion cell layer and throughout the inner nuclear layer in amacrine and bipolar cells. Not expressed in the outer nuclear layer. In the testis, detected in the seminiferous tubules.

Its function is as follows. May play a role in lipid transport. This is Fatty acid-binding protein 12 from Rattus norvegicus (Rat).